Reading from the N-terminus, the 375-residue chain is Chaperone protein DnaJ (375 aa).

Positions 5 to 70 constitute a J domain; the sequence is DYYEVLGVER…GKRMAYDQYG (66 aa). A CR-type zinc finger spans residues 134–212; that stretch reads GTTVTIRVPT…CHGQGRVEEH (79 aa). 8 residues coordinate Zn(2+): cysteine 147, cysteine 150, cysteine 164, cysteine 167, cysteine 186, cysteine 189, cysteine 200, and cysteine 203. CXXCXGXG motif repeat units follow at residues 147–154, 164–171, 186–193, and 200–207; these read CKTCDGSG, CTTCGGIG, CPRCHGSG, and CPDCHGQG.

It belongs to the DnaJ family. Homodimer. The cofactor is Zn(2+).

The protein localises to the cytoplasm. Participates actively in the response to hyperosmotic and heat shock by preventing the aggregation of stress-denatured proteins and by disaggregating proteins, also in an autonomous, DnaK-independent fashion. Unfolded proteins bind initially to DnaJ; upon interaction with the DnaJ-bound protein, DnaK hydrolyzes its bound ATP, resulting in the formation of a stable complex. GrpE releases ADP from DnaK; ATP binding to DnaK triggers the release of the substrate protein, thus completing the reaction cycle. Several rounds of ATP-dependent interactions between DnaJ, DnaK and GrpE are required for fully efficient folding. Also involved, together with DnaK and GrpE, in the DNA replication of plasmids through activation of initiation proteins. The protein is Chaperone protein DnaJ of Azotobacter vinelandii (strain DJ / ATCC BAA-1303).